A 97-amino-acid chain; its full sequence is Carboxysome shell protein CsoS1B (97 aa).

One can recognise a BMC domain in the interval A8–T93.

The protein belongs to the bacterial microcompartments protein family. CsoS1 subfamily. In terms of assembly, homohexamer with a small central pore.

The protein resides in the carboxysome. In terms of biological role, one of shell proteins of the carboxysome, a polyhedral inclusion where RuBisCO (ribulose bisphosphate carboxylase, ccbL-ccbS) is sequestered. Assembles into hexamers which make sheets that form the facets of the polyhedral carboxysome. The shell probably limits the diffusion of CO(2) into and out of the carboxysome. The protein is Carboxysome shell protein CsoS1B of Hydrogenovibrio crunogenus (strain DSM 25203 / XCL-2) (Thiomicrospira crunogena).